The sequence spans 121 residues: Fumarate reductase subunit D (121 aa).

A run of 3 helical transmembrane segments spans residues 22-42 (GVWFAMITPVTVLLMGILLPL), 57-77 (AFVSHPIGGAFTVLSLSLPMW), and 100-120 (YACYLAAALVTVLATVWVIQL).

Belongs to the FrdD family. In terms of assembly, part of an enzyme complex containing four subunits: a flavoprotein (FrdA), an iron-sulfur protein (FrdB), and two hydrophobic anchor proteins (FrdC and FrdD).

The protein resides in the cell inner membrane. Functionally, anchors the catalytic components of the fumarate reductase complex to the cell membrane, binds quinones. The protein is Fumarate reductase subunit D of Shewanella putrefaciens (strain CN-32 / ATCC BAA-453).